Consider the following 536-residue polypeptide: MIQRTTDPAAGSSTSGPPTNSLSWGSRHNGKLYTLEVVQHPIRARMCGFGDKDRRPLAPAAVATMNVYREDNTQVEVDDIDCSFFLVTVDLWSEDGKQEMNLVLHPNAAQDRGPPMPAKPRRPTNPPPPSNTHGSPPAPAIPFPSYGPPTPYYPPWSAPASDRSPSSASAVLPSISTSFGRAPGPSSATPYGPQYGPPSASSYGPPSASAYGPPSASAYGPPSASAYGPPSASTYGPSSASAYGPPSSASYGPPTSSYASSYPPYHYGPPPPPFGNYGSTSNFDHSQPVTSSVDQETNSPVVTTTARDDDQREGEASTSAAGNPRADPSNSGAPSTSPTASTMGRRESRGRRRRREEREGPDGGPDLREPIEPGSTKAREEEDARTGTEKGDPKDKSDAQRATYTRTLVGPLSSNATRLLDEHRKPGIFFLFQDLSVRTEGTFRLRLRLMNVGAPPAPEPGAAGVHTGVSPVLAQVFTKPFTVFSAKRFPGVPDTTALSIAFNQQNMKLPLRNRHGSGSKRRRRGAGGGSDDEESD.

The segment covering 1 to 26 has biased composition (polar residues); the sequence is MIQRTTDPAAGSSTSGPPTNSLSWGS. Disordered regions lie at residues 1 to 27, 106 to 143, 157 to 409, and 508 to 536; these read MIQR…WGSR, PNAA…AIPF, SAPA…RTLV, and KLPL…EESD. Residues 25-512 form the Velvet domain; it reads GSRHNGKLYT…NQQNMKLPLR (488 aa). Pro residues predominate over residues 114-143; it reads PPMPAKPRRPTNPPPPSNTHGSPPAPAIPF. 2 stretches are compositionally biased toward low complexity: residues 158–170 and 190–265; these read APAS…SASA and PYGP…YPPY. A compositionally biased stretch (polar residues) spans 280–305; that stretch reads TSNFDHSQPVTSSVDQETNSPVVTTT. The segment covering 306–315 has biased composition (basic and acidic residues); that stretch reads ARDDDQREGE. Low complexity predominate over residues 328 to 342; the sequence is PSNSGAPSTSPTAST. The span at 356 to 399 shows a compositional bias: basic and acidic residues; that stretch reads EEREGPDGGPDLREPIEPGSTKAREEEDARTGTEKGDPKDKSDA. Positions 400 to 409 are enriched in polar residues; sequence QRATYTRTLV. The span at 511–525 shows a compositional bias: basic residues; the sequence is LRNRHGSGSKRRRRG.

The protein belongs to the velvet family. VelB subfamily. As to quaternary structure, component of the heterotrimeric velvet complex composed of laeA, veA and velB; VeA acting as a bridging protein between laeA and velB. Forms a heterodimeric complex with vosA; the formation of the velB-vosA complex is light-dependent.

The protein localises to the nucleus. Its subcellular location is the cytoplasm. Its function is as follows. Component of the velvet transcription factor complex that controls sexual/asexual developmental ratio in response to light, promoting sexual development in the darkness while stimulating asexual sporulation under illumination. The velvet complex acts as a global regulator for secondary metabolite gene expression. Component of the velB-VosA heterodimeric complex that plays a dual role in activating genes associated with spore maturation and repressing certain development-associated genes. The velB-VosA complex binds DNA through the DNA-binding domain of vosA that recognizes an 11-nucleotide consensus sequence 5'-CTGGCCGCGGC-3' consisting of two motifs in the promoters of key developmental regulatory genes. This is Velvet complex subunit B from Schizophyllum commune (strain H4-8 / FGSC 9210) (Split gill fungus).